The following is a 77-amino-acid chain: Antitoxin VapB2 (77 aa).

Positions 4-46 (ASVFMTNRSQAVRLPAEVRFSEEIKKLSVRVSGSDRILSPLNQ) constitute a SpoVT-AbrB domain.

Belongs to the VapB family. In terms of assembly, probably forms a complex with cognate toxin VapC2.

In terms of biological role, antitoxin component of a type II toxin-antitoxin (TA) system. Neutralizes the effect of cognate toxin VapC2 but not non-cognate toxin VapC2. The polypeptide is Antitoxin VapB2 (Haemophilus influenzae (strain 86-028NP)).